Here is a 493-residue protein sequence, read N- to C-terminus: Cytochrome P450 Tp9025 (493 aa).

Residues 1–21 (MALYIIFLLIASSFILFSFIF) form a helical; Signal-anchor for type II membrane protein membrane-spanning segment. N-linked (GlcNAc...) asparagine glycans are attached at residues Asn-209 and Asn-411. Position 433 (Cys-433) interacts with heme.

The protein belongs to the cytochrome P450 family. The cofactor is heme.

The protein resides in the membrane. Its pathway is secondary metabolite biosynthesis; terpenoid biosynthesis. Probably involved in the biosynthesis of germacrene-derived sesquiterpene lactones. This Tanacetum parthenium (Feverfew) protein is Cytochrome P450 Tp9025.